The primary structure comprises 162 residues: Beta-lactoglobulin-1 (162 aa).

2 disulfides stabilise this stretch: Cys-66–Cys-160 and Cys-106–Cys-119.

This sequence belongs to the calycin superfamily. Lipocalin family. In terms of assembly, monomer.

It is found in the secreted. In terms of biological role, lactoglobulin is the primary component of whey, it binds retinol and is probably involved in the transport of that molecule. In Felis catus (Cat), this protein is Beta-lactoglobulin-1 (LGB1).